A 615-amino-acid polypeptide reads, in one-letter code: Albumin (615 aa).

The signal sequence occupies residues 1–18 (MKWVTLISFIFLFSSATS). Residues 19–23 (RNLQR) constitute a propeptide that is removed on maturation. 3 Albumin domains span residues 22–214 (QRFA…IVMR), 215–407 (EKAK…QLNQ), and 408–605 (HIKE…NLIV). His-30 is a binding site for Cu cation. Residues Glu-33 and Asp-40 each coordinate Ca(2+). 7 cysteine pairs are disulfide-bonded: Cys-80/Cys-89, Cys-102/Cys-118, Cys-117/Cys-128, Cys-152/Cys-197, Cys-196/Cys-205, Cys-228/Cys-274, and Cys-273/Cys-281. Positions 272, 277, 280, and 283 each coordinate Ca(2+). Asp-277 serves as a coordination point for Zn(2+). 10 cysteine pairs are disulfide-bonded: Cys-293-Cys-307, Cys-306-Cys-317, Cys-344-Cys-389, Cys-388-Cys-397, Cys-420-Cys-466, Cys-465-Cys-476, Cys-489-Cys-505, Cys-504-Cys-515, Cys-542-Cys-587, and Cys-586-Cys-595. Asn-500 carries N-linked (GlcNAc...) asparagine glycosylation.

The protein belongs to the ALB/AFP/VDB family. In terms of tissue distribution, plasma.

It is found in the secreted. Its function is as follows. Binds water, Ca(2+), Na(+), K(+), fatty acids, hormones, bilirubin and drugs. Its main function is the regulation of the colloidal osmotic pressure of blood. The chain is Albumin (ALB) from Gallus gallus (Chicken).